Consider the following 265-residue polypeptide: MSPNSTGLAVRVIPCLDVDDGRVVKGVNFENLRDAGDPVELAAVYDAEGADELTFLDVTASSSGRATMLDVVRRTAEQVFIPLTVGGGVRTVADVDVLLRAGADKVSVNTAAIARPELLEEMARQFGSQCIVLSVDARTVPPGAVPTPSGWEVTTHGGRRGTGIDAVEWASRGADLGVGEILLNSMDADGTKAGFDLEMLQAVRSAVTVPVIASGGAGAAEHFAPAIEAGADAVLAASVFHFRELTIGQVKAAMAEAGIPVRMVR.

Active-site residues include aspartate 17 and aspartate 136.

The protein belongs to the HisA/HisF family. In terms of assembly, heterodimer of HisH and HisF.

The protein localises to the cytoplasm. It catalyses the reaction 5-[(5-phospho-1-deoxy-D-ribulos-1-ylimino)methylamino]-1-(5-phospho-beta-D-ribosyl)imidazole-4-carboxamide + L-glutamine = D-erythro-1-(imidazol-4-yl)glycerol 3-phosphate + 5-amino-1-(5-phospho-beta-D-ribosyl)imidazole-4-carboxamide + L-glutamate + H(+). It functions in the pathway amino-acid biosynthesis; L-histidine biosynthesis; L-histidine from 5-phospho-alpha-D-ribose 1-diphosphate: step 5/9. Functionally, IGPS catalyzes the conversion of PRFAR and glutamine to IGP, AICAR and glutamate. The HisF subunit catalyzes the cyclization activity that produces IGP and AICAR from PRFAR using the ammonia provided by the HisH subunit. The protein is Imidazole glycerol phosphate synthase subunit HisF of Mycolicibacterium paratuberculosis (strain ATCC BAA-968 / K-10) (Mycobacterium paratuberculosis).